The following is an 81-amino-acid chain: MKTLLLTLVVVTIVCLDLGNSLKCYVSREGKTQTCPEGEKLCEKYAVSYFHDGRWRYRYECTSACHRGPYNVCCSTDLCNK.

Residues 1–21 form the signal peptide; that stretch reads MKTLLLTLVVVTIVCLDLGNS. 4 disulfides stabilise this stretch: Cys24-Cys42, Cys35-Cys61, Cys65-Cys73, and Cys74-Cys79.

This sequence belongs to the three-finger toxin family. Short-chain subfamily. In terms of processing, contains 4 disulfide bonds. As to expression, expressed by the venom gland.

It localises to the secreted. Functionally, snake venom neurotoxin that blocks neuromuscular transmission on both avian and mouse nerve-muscle preparations, presenting a postsynaptic action through the nicotinic acetylcholine receptor (nAChR). Reversibly inhibits twitches in mouse phrenic nerve diaphragm and irreversibly in chick biventer cervicis muscle. Has no cytotoxic activity towards C2C12 cells up to 180 ug/ml. This Micrurus mipartitus (Red-tailed coral snake) protein is Mipartoxin-1.